We begin with the raw amino-acid sequence, 438 residues long: tRNA modification GTPase MnmE (438 aa).

Residues arginine 20, glutamate 79, and lysine 119 each contribute to the (6S)-5-formyl-5,6,7,8-tetrahydrofolate site. Residues 215–360 (GVEVAIVGPP…LEAALAARVG (146 aa)) enclose the TrmE-type G domain. GTP contacts are provided by residues 225–230 (NAGKSS), 244–250 (SDEAGTT), and 269–272 (DTAG). Serine 229 and threonine 250 together coordinate Mg(2+). Residue lysine 438 coordinates (6S)-5-formyl-5,6,7,8-tetrahydrofolate.

Belongs to the TRAFAC class TrmE-Era-EngA-EngB-Septin-like GTPase superfamily. TrmE GTPase family. Homodimer. Heterotetramer of two MnmE and two MnmG subunits. It depends on K(+) as a cofactor.

Its subcellular location is the cytoplasm. Its function is as follows. Exhibits a very high intrinsic GTPase hydrolysis rate. Involved in the addition of a carboxymethylaminomethyl (cmnm) group at the wobble position (U34) of certain tRNAs, forming tRNA-cmnm(5)s(2)U34. In Parvibaculum lavamentivorans (strain DS-1 / DSM 13023 / NCIMB 13966), this protein is tRNA modification GTPase MnmE.